Here is a 328-residue protein sequence, read N- to C-terminus: 6-phosphogluconolactonase (328 aa).

The protein belongs to the cycloisomerase 2 family.

The catalysed reaction is 6-phospho-D-glucono-1,5-lactone + H2O = 6-phospho-D-gluconate + H(+). It participates in carbohydrate degradation; pentose phosphate pathway; D-ribulose 5-phosphate from D-glucose 6-phosphate (oxidative stage): step 2/3. Functionally, catalyzes the hydrolysis of 6-phosphogluconolactone to 6-phosphogluconate. This is 6-phosphogluconolactonase from Xenorhabdus nematophila (strain ATCC 19061 / DSM 3370 / CCUG 14189 / LMG 1036 / NCIMB 9965 / AN6).